The chain runs to 174 residues: Inactive signal peptidase IA (174 aa).

Residues 1 to 7 (MKKVVKY) are Cytoplasmic-facing. A helical membrane pass occupies residues 8 to 28 (LISLILAIIIVLFVQTFVIVG). The Extracellular segment spans residues 29–174 (HVIPNNDMSP…FSKWTIQFKS (146 aa)).

It belongs to the peptidase S26 family.

It localises to the cell membrane. Its function is as follows. Catalytically inactive. The sequence is that of Inactive signal peptidase IA (spsA) from Staphylococcus aureus (strain MRSA252).